We begin with the raw amino-acid sequence, 147 residues long: uncharacterized protein (147 aa).

This is an uncharacterized protein from Saccharomyces cerevisiae (strain ATCC 204508 / S288c) (Baker's yeast).